A 357-amino-acid chain; its full sequence is tRNA pseudouridine synthase D (357 aa).

The Nucleophile role is filled by Asp-76. A TRUD domain is found at 151-331 (GMPNYFGYQR…DGRYKDEEAQ (181 aa)).

It belongs to the pseudouridine synthase TruD family.

The catalysed reaction is uridine(13) in tRNA = pseudouridine(13) in tRNA. Functionally, responsible for synthesis of pseudouridine from uracil-13 in transfer RNAs. The protein is tRNA pseudouridine synthase D of Sulfurimonas denitrificans (strain ATCC 33889 / DSM 1251) (Thiomicrospira denitrificans (strain ATCC 33889 / DSM 1251)).